Reading from the N-terminus, the 481-residue chain is Amino acid permease 6 (481 aa).

The Cytoplasmic portion of the chain corresponds to 1-36 (MEKKKSMFVEQSFPEHEIGDTNKNFDEDGRDKRTGT). The next 2 helical transmembrane spans lie at 37–57 (WMTG…LSLA) and 58–78 (WAIA…FSFI). The Cytoplasmic portion of the chain corresponds to 79 to 125 (TYFTSTMLADCYRSPDPVTGKRNYTYMEVVRSYLGGRKVQLCGLAQY). Residues 126–146 (GNLIGITIGYTITASISMVAV) traverse the membrane as a helical segment. The Extracellular portion of the chain corresponds to 147 to 167 (KRSNCFHKNGHNVKCATSNTP). A helical transmembrane segment spans residues 168-188 (FMIIFAIIQIILSQIPNFHNL). Over 189 to 190 (SW) the chain is Cytoplasmic. The chain crosses the membrane as a helical span at residues 191–211 (LSILAAVMSFCYASIGVGLSI). The Extracellular portion of the chain corresponds to 212 to 242 (AKAAGGGEHVRTTLTGVTVGIDVSGAEKIWR). The chain crosses the membrane as a helical span at residues 243 to 263 (TFQAIGDIAFAYAYSTVLIEI). The Cytoplasmic portion of the chain corresponds to 264-283 (QDTLKAGPPSENKAMKRASL). A helical membrane pass occupies residues 284-304 (VGVSTTTFFYMLCGCVGYAAF). Topologically, residues 305–321 (GNDAPGNFLTGFGFYEP) are extracellular. A helical membrane pass occupies residues 322–342 (FWLIDFANVCIAVHLIGAYQV). At 343 to 385 (FCQPIFQFVESQSAKRWPDNKFITGEYKIHVPCCGDFSINFLR) the chain is on the cytoplasmic side. A helical membrane pass occupies residues 386–405 (LVWRTSYVVVTAVVAMIFPF). At 406–408 (FND) the chain is on the extracellular side. Residues 409–427 (FLGLIGAASFWPLTVYFPI) traverse the membrane as a helical segment. The Cytoplasmic segment spans residues 428 to 447 (EMHIAQKKIPKFSFTWTWLK). Residues 448-468 (ILSWTCFIVSLVAAAGSVQGL) form a helical membrane-spanning segment. Residues 469–481 (IQSLKDFKPFQAP) are Extracellular-facing.

Belongs to the amino acid/polyamine transporter 2 family. Amino acid/auxin permease (AAAP) (TC 2.A.18.2) subfamily. As to expression, expressed in roots and leaves, and at lower levels in stems and flowers. Found in the xylem parenchyma.

It is found in the cell membrane. Amino acid-proton symporter. Stereospecific transporter with a broad specificity for tryptophan, proline, and neutral and acidic amino acids. Has an affinity for aspartate in a physiological range. Involved in the uptake of amino acids diffusing out of the xylem tracheids into the xylem parenchyma. This chain is Amino acid permease 6 (AAP6), found in Arabidopsis thaliana (Mouse-ear cress).